The following is a 54-amino-acid chain: Ovomucoid (54 aa).

In terms of domain architecture, Kazal-like spans 4-54 (VDCSDYPTHGCTLELKPICGSDNQTYSNKCGFCNAVAQSNGTLTLSHFGKC). 3 cysteine pairs are disulfide-bonded: Cys-6/Cys-36, Cys-14/Cys-33, and Cys-22/Cys-54. Residue Asn-43 is glycosylated (N-linked (GlcNAc...) asparagine).

The protein resides in the secreted. This is Ovomucoid from Aepypodius arfakianus (Wattled brush turkey).